Reading from the N-terminus, the 355-residue chain is dTDP-D-glucose 4,6-dehydratase (355 aa).

Thr142 serves as a coordination point for substrate. Residue Asp143 is the Proton donor of the active site. Active-site proton acceptor residues include Glu144 and Tyr166.

It belongs to the NAD(P)-dependent epimerase/dehydratase family. dTDP-glucose dehydratase subfamily. NAD(+) is required as a cofactor.

It carries out the reaction dTDP-alpha-D-glucose = dTDP-4-dehydro-6-deoxy-alpha-D-glucose + H2O. This Bos taurus (Bovine) protein is dTDP-D-glucose 4,6-dehydratase (TGDS).